A 248-amino-acid chain; its full sequence is tRNA uridine(34) hydroxylase (248 aa).

The Rhodanese domain maps to 128–222 (EGRPVVMLDT…YFEEVGGAHY (95 aa)). The active-site Cysteine persulfide intermediate is Cys182.

This sequence belongs to the TrhO family.

The catalysed reaction is uridine(34) in tRNA + AH2 + O2 = 5-hydroxyuridine(34) in tRNA + A + H2O. In terms of biological role, catalyzes oxygen-dependent 5-hydroxyuridine (ho5U) modification at position 34 in tRNAs. The sequence is that of tRNA uridine(34) hydroxylase from Thiobacillus denitrificans (strain ATCC 25259 / T1).